We begin with the raw amino-acid sequence, 482 residues long: Glutamyl-tRNA(Gln) amidotransferase subunit A (482 aa).

Residues K74 and S149 each act as charge relay system in the active site. Catalysis depends on S173, which acts as the Acyl-ester intermediate.

Belongs to the amidase family. GatA subfamily. As to quaternary structure, heterotrimer of A, B and C subunits.

It carries out the reaction L-glutamyl-tRNA(Gln) + L-glutamine + ATP + H2O = L-glutaminyl-tRNA(Gln) + L-glutamate + ADP + phosphate + H(+). Its function is as follows. Allows the formation of correctly charged Gln-tRNA(Gln) through the transamidation of misacylated Glu-tRNA(Gln) in organisms which lack glutaminyl-tRNA synthetase. The reaction takes place in the presence of glutamine and ATP through an activated gamma-phospho-Glu-tRNA(Gln). The protein is Glutamyl-tRNA(Gln) amidotransferase subunit A of Prochlorococcus marinus (strain AS9601).